A 461-amino-acid polypeptide reads, in one-letter code: NADP-specific glutamate dehydrogenase (461 aa).

The active site involves K115.

This sequence belongs to the Glu/Leu/Phe/Val dehydrogenases family. In terms of assembly, homohexamer.

The enzyme catalyses L-glutamate + NADP(+) + H2O = 2-oxoglutarate + NH4(+) + NADPH + H(+). The polypeptide is NADP-specific glutamate dehydrogenase (GDH) (Penicillium chrysogenum (Penicillium notatum)).